Reading from the N-terminus, the 82-residue chain is Small ribosomal subunit protein bS16 (82 aa).

It belongs to the bacterial ribosomal protein bS16 family.

This chain is Small ribosomal subunit protein bS16, found in Klebsiella pneumoniae subsp. pneumoniae (strain ATCC 700721 / MGH 78578).